The chain runs to 461 residues: Ribitol-5-phosphate transferase FKTN (461 aa).

Residues 1–7 (MSRINKN) are Cytoplasmic-facing. The tract at residues 6–27 (KNVVLALLTLTSSAFLLFQLYY) is required and sufficient for interaction with POMGNT1. Residues 8–28 (VVLALLTLTSSAFLLFQLYYY) form a helical; Signal-anchor for type II membrane protein membrane-spanning segment. The Lumenal segment spans residues 29–461 (KHYLSTRNGA…SEWDEVIQLY (433 aa)). N-linked (GlcNAc...) asparagine glycosylation occurs at Asn92.

This sequence belongs to the LicD transferase family. As to quaternary structure, forms a complex composed of FKTN/fukutin, FKRP and RXYLT1/TMEM5. Interacts (via transmembrane domain) with POMGNT1; the interaction is direct and is required for normal POMGNT1 location in Golgi membranes. Expressed in the retina (at protein level).

Its subcellular location is the golgi apparatus membrane. It localises to the cytoplasm. The protein resides in the nucleus. It carries out the reaction 3-O-[beta-D-GalNAc-(1-&gt;3)-beta-D-GlcNAc-(1-&gt;4)-(O-6-P-alpha-D-Man)]-Thr-[protein] + CDP-L-ribitol = 3-O-[Rib-ol-P-3-beta-D-GalNAc-(1-&gt;3)-beta-D-GlcNAc-(1-&gt;4)-(O-6-P-alpha-D-Man)]-Thr-[protein] + CMP + H(+). It functions in the pathway protein modification; protein glycosylation. Catalyzes the transfer of CDP-ribitol to the distal N-acetylgalactosamine of the phosphorylated O-mannosyl trisaccharide (N-acetylgalactosamine-beta-3-N-acetylglucosamine-beta-4-(phosphate-6-)mannose), a carbohydrate structure present in alpha-dystroglycan (DAG1). This constitutes the first step in the formation of the ribitol 5-phosphate tandem repeat which links the phosphorylated O-mannosyl trisaccharide to the ligand binding moiety composed of repeats of 3-xylosyl-alpha-1,3-glucuronic acid-beta-1. May interact with and reinforce a large complex encompassing the outside and inside of muscle membranes. Could be involved in brain development. This is Ribitol-5-phosphate transferase FKTN from Macaca fascicularis (Crab-eating macaque).